The sequence spans 1289 residues: MRKYTVIASILLSFLSVLSGGHHESKAFPVVQQELFQTPHYIPLLENPPQIDVKAEMRSNLMIEAQVRDNSYQAFSAFLFYKQSNELGYKMVPMDPTPGAVRKFLAQIPKRLIWNSELEYYIVMSNGKQRVESETKKLKLEGYQADLAHIPELLITELAVDTKNIGRADGYEFIEIFNTTDRTIDFKDYHIRYRYPKEGPDSDLIWRPDERILIPSGETFVVWLKPAGHPELTSADFNRYYQTQLKEGKNLAVIDETEGMANTRPRAVVISTNTGKDISVAHYRKHALRRLSSVLYKYPLNGTAELLNISIGEKNPSPGTVLQAQVPDQKRKIKLDKEKPVIEDLTDRKPVRPAESIELRADIRDRSLVKTVAFYYRTDENKPFKRILAEKDRNDNLFHYIVYSPELIGKDQLEYYVAAGDGINEARTPVKMIDIKQTSKAHGLRMNIENRDTLSGTQFLKATTEGRADSIKLWIDGKKQVTEPAMEKEVYFAFDTRKTNLYFKNAVTMEGKVLKVFDDTTNKYRTYSVPLPETLLRKGKQLQRITIRSGSKVSPFDTAENRDDFLVKNARLVLSDGTVIRDQRVSPEKELFIGDNQRSNKSWQFQFNLPDGLFTSQLLEWDTSKLSEGAHHIQASDGKENVSLVVRVDNSGPHIEPNITEGQTYKGNLILQADMYDKWSRIEEAEASLDGESITLPYHTSSSDLLPGKHSLKVTATDLAGNKTVIERIFKTEREHPDQPEVIDSEADTHKAKLSVRVKDPTNDAMDVGFYRGFQYTARNHVKIFKHASLTEPPKSFVPERETPFTNKELERVSAADGKTVSTENKELFPYHRFEVTVDPSIDENDLAESVWKGSSLPGRKVTMYAWNYRTNEWQPVDSFVAKDDKPFTLKASVIAADFVRESKMNVIVQDEIPPAKDMYTFVWMSDTQYYAESYPHIFDKQTEWIKDNQKQLNIKYVFHTGDIVDDSADIRQWKNADRSMSVLDKSGIPYGVLAGNHDVGHKDGSYRAFGKYFGSDRFDKKFHYGGSYKNNRGHYDLISSNGNDYIMLYMGWGITDEDIAWMNQVLKKHPDRMAILAFHEYLLVSGNRSPIGEKIFKEIVKPNPNVVMVLSGHYHSAMRKTDELDDDGDGKPDRLVHQMLADYQGGPEGGQGYLRLLQFDQANDMVHVSTYSPYVKDKNYYDTDTYGNKDEFSLSLDLKPRIKKVETDYFECNVYTNEELGKREQVKSGDTAEFRWDHLEPQSVYYWYIIVEDSFNGKTKSPIWKFKTKKETYRPAPDQFDFRHVSNP.

A signal peptide spans 1 to 23 (MRKYTVIASILLSFLSVLSGGHH). One can recognise an LTD domain in the interval 141–277 (EGYQADLAHI…VVISTNTGKD (137 aa)).

This is an uncharacterized protein from Bacillus subtilis (strain 168).